The primary structure comprises 283 residues: Interferon alpha-inducible protein 27-like protein 2B (283 aa).

The N-terminal 90 residues, 1–90, are a transit peptide targeting the mitochondrion; it reads MKRKFVGAAI…AVGTATGARA (90 aa). The disordered stretch occupies residues 90-120; it reads AEGSMGASREQESGPQDPPQELQEPQEPPSC. 3 consecutive transmembrane segments (helical) span residues 130-150, 176-196, and 202-222; these read FVGA…ALSA, GGGI…ILGL, and IILG…MGAC. Residues 227–283 are disordered; the sequence is PGLQDLQQEPKEPQEPQELQKQQEPQEPQELQKQQETQETQETQELQKTQEPPSYEK. The span at 242-283 shows a compositional bias: low complexity; it reads PQELQKQQEPQEPQELQKQQETQETQETQELQKTQEPPSYEK.

It belongs to the IFI6/IFI27 family. In terms of assembly, homooligomer. Interacts with BAK1. Interacts with BAX. Interacts with adenine nucleotide translocase.

The protein resides in the mitochondrion inner membrane. In terms of biological role, functions in the intrinsic apoptotic signaling pathway and may have an interferon-induced antiviral activity. The polypeptide is Interferon alpha-inducible protein 27-like protein 2B (Mus musculus (Mouse)).